Consider the following 1269-residue polypeptide: MEATGVLPFVRGVDLSGNDFKGGYFPENVKAMTSLRWLKLNRTGLCYLPEELAALQKLEHLSVSHNNLTTLHGELSSLPSLRAIVARANSLKNSGVPDDIFKLDDLSVLDLSHNQLTECPRELENAKNMLVLNLSHNSIDTIPNQLFINLTDLLYLDLSENRLESLPPQMRRLVHLQTLVLNGNPLLHAQLRQLPAMTALQTLHLRSTQRTQSNLPTSLEGLSNLADVDLSCNDLTRVPECLYTLPSLRRLNLSSNQITELSLCIDQWVHVETLNLSRNQLTSLPSAICKLSKLKKLYLNSNKLDFDGLPSGIGKLTNLEEFMAANNNLELVPESLCRCPKLRKLVLNKNHLVTLPEAIHFLTEIEVLDVRENPNLVMPPKPADRAAEWYNIDFSLQNQLRLAGASPATVAAAAAAGSGPKDPMARKMRLRRRKDSAQDDQAKQVLKGMSDVAQEKNKKQEESADARAPSGKVRRWDQGLEKPRLDYSEFFTEDVGQLPGLTIWQIENFVPVLVEEAFHGKFYEADCYIVLKTFLDDSGSLNWEIYYWIGGEATLDKKACSAIHAVNLRNYLGAECRTVREEMGDESEEFLQVFDNDISYIEGGTASGFYTVEDTHYVTRMYRVYGKKNIKLEPVPLKGTSLDPRFVFLLDRGLDIYVWRGAQATLSSTTKARLFAEKINKNERKGKAEITLLVQGQELPEFWEALGGEPSEIKKHVPEDFWPPQPKLYKVGLGLGYLELPQINYKLSVEHKQRPKVELMPRMRLLQSLLDTRCVYILDCWSDVFIWLGRKSPRLVRAAALKLGQELCGMLHRPRHATVSRSLEGTEAQVFKAKFKNWDDVLTVDYTRNAEAVLQSPGLSGKVKRDAEKKDQMKADLTALFLPRQPPMSLAEAEQLMEEWNEDLDGMEGFVLEGKKFARLPEEEFGHFYTQDCYVFLCRYWVPVEYEEEEKKEDKEEKAEGKEGEEATAEAEEKQPEEDFQCIVYFWQGREASNMGWLTFTFSLQKKFESLFPGKLEVVRMTQQQENPKFLSHFKRKFIIHRGKRKAVQGAQQPSLYQIRTNGSALCTRCIQINTDSSLLNSEFCFILKVPFESEDNQGIVYAWVGRASDPDEAKLAEDILNTMFDTSYSKQVINEGEEPENFFWVGIGAQKPYDDDAEYMKHTRLFRCSNEKGYFAVTEKCSDFCQDDLADDDIMLLDNGQEVYMWVGTQTSQVEIKLSLKACQVYIQHMRSKEHERPRRLRLVRKGNEQHAFTRCFHAWSAFCKALA.

Met1 bears the N-acetylmethionine mark. The interval 1-427 (MEATGVLPFV…SGPKDPMARK (427 aa)) is interaction with LRRFIP1 and LRRFIP2. LRR repeat units follow at residues 7-32 (LPFV…VKAM), 33-55 (TSLR…LAAL), 56-78 (QKLE…LSSL), 80-103 (SLRA…IFKL), 104-126 (DDLS…LENA), 127-149 (KNML…LFIN), 150-173 (LTDL…MRRL), 175-196 (HLQT…QLPA), 197-222 (MTAL…LEGL), 223-245 (SNLA…LYTL), 247-268 (SLRR…IDQW), 269-291 (VHVE…ICKL), 293-316 (KLKK…IGKL), 318-339 (NLEE…LCRC), 340-363 (PKLR…HFLT), and 365-385 (IEVL…PADR). Residue Lys21 is modified to N6-acetyllysine. A Phosphoserine modification is found at Ser406. Position 436 is a phosphoserine; by SGK3 (Ser436). The interval 452–473 (VAQEKNKKQEESADARAPSGKV) is disordered. The segment covering 453-465 (AQEKNKKQEESAD) has biased composition (basic and acidic residues). An interaction with ACTL6A region spans residues 495–827 (VGQLPGLTIW…TVSRSLEGTE (333 aa)). Gelsolin-like repeat units lie at residues 509–591 (FVPV…EEFL), 629–703 (NIKL…PEFW), and 758–831 (ELMP…AQVF). At Thr818 the chain carries Phosphothreonine; by SGK3. Residues Ser856 and Ser860 each carry the phosphoserine modification. Positions 951–975 (KKEDKEEKAEGKEGEEATAEAEEKQ) are disordered. Basic and acidic residues predominate over residues 952 to 965 (KEDKEEKAEGKEGE). The segment covering 966–975 (EATAEAEEKQ) has biased composition (acidic residues). Gelsolin-like repeat units lie at residues 1075-1143 (TDSS…PENF) and 1181-1254 (KCSD…QHAF).

As to quaternary structure, interacts with actin, ACTL6A, NCOA2 and CARM1. Interacts with LRRFIP1, LRRFIP2 and MYD88. Upon LPS stimulation, LRRFIP2 competes for MYD88-binding. LRRFIP1 constitutively blocks the interaction with MyD88, even in the absence of LPS. Interacts with the nuclear receptors ESR1 and THRB. Interacts with SGK3. Interacts (via the gelsolin-like region) with TMOD1. Interacts with (via the gelsolin-like region) TMOD3. Interacts with LMOD2, VCL, GSN and DES. As to expression, strongest expression in skeletal muscle with high expression also in the heart and lung.

Its subcellular location is the nucleus. It localises to the cytoplasm. The protein resides in the cytoskeleton. The protein localises to the microtubule organizing center. It is found in the centrosome. Its subcellular location is the cell projection. It localises to the podosome. The protein resides in the cell junction. The protein localises to the focal adhesion. In terms of biological role, is a regulator of actin polymerization, required for proper myofibril organization and regulation of the length of sarcomeric thin filaments. It also plays a role in the assembly of cardiomyocyte cell adhesion complexes. Regulates cytoskeletal rearrangements involved in cytokinesis and cell migration, by inhibiting Rac1-dependent paxillin phosphorylation. May play a role as coactivator in transcriptional activation by hormone-activated nuclear receptors (NR) and acts in cooperation with NCOA2 and CARM1. Involved in estrogen hormone signaling. In Homo sapiens (Human), this protein is Protein flightless-1 homolog (FLII).